Reading from the N-terminus, the 260-residue chain is MANLGCWMLVLFVATWSDLGLCKKRPKPGGWNTGGSRYPGQGSPGGNRYPPQGGGWGQPHGGGWGQPHGGGWGQPHGGGWGQPHGGGWGQPHGGGWGQGGGTHNQWNKPSKPKTNMKHMAGAAAAGAVVGGLGGYMLGSAMSRPLIHFGNDYEDRYYRENMYRYPSQVYYRPVDQYSNQNNFVHDCVNVTIKQHTVTTTTKGENFTETDVKMMERVVEQMCITQYEKESQAYYQRGSSMVLFSSPPVILLISFLIFLIVG.

The N-terminal stretch at Met-1 to Cys-22 is a signal peptide. The segment at Lys-23–Ser-237 is interaction with GRB2, ERI3 and SYN1. Positions Pro-26–Pro-112 are disordered. Tandem repeats lie at residues Pro-51–Gln-58, Pro-59–Gln-66, Pro-67–Gln-74, Pro-75–Gln-82, Pro-83–Gln-90, and Pro-91–Gln-98. The segment at Pro-51–Gln-98 is 6 X 8 AA tandem repeats of P-H-G-G-G-W-G-Q. Positions Gln-52–Thr-102 are enriched in gly residues. Residues His-68, Gly-69, Gly-70, His-76, Gly-77, Gly-78, His-84, Gly-85, Gly-86, His-92, Gly-93, and Gly-94 each coordinate Cu(2+). Cys-186 and Cys-221 form a disulfide bridge. N-linked (GlcNAc...) asparagine glycosylation is found at Asn-188 and Asn-204. Ser-237 carries the GPI-anchor amidated serine lipid modification. Residues Ser-238–Gly-260 constitute a propeptide, removed in mature form.

This sequence belongs to the prion family. Monomer and homodimer. Has a tendency to aggregate into amyloid fibrils containing a cross-beta spine, formed by a steric zipper of superposed beta-strands. Soluble oligomers may represent an intermediate stage on the path to fibril formation. Copper binding may promote oligomerization. Interacts with GRB2, APP, ERI3/PRNPIP and SYN1. Mislocalized cytosolically exposed PrP interacts with MGRN1; this interaction alters MGRN1 subcellular location and causes lysosomal enlargement. Interacts with KIAA1191.

Its subcellular location is the cell membrane. It localises to the golgi apparatus. In terms of biological role, its primary physiological function is unclear. Has cytoprotective activity against internal or environmental stresses. May play a role in neuronal development and synaptic plasticity. May be required for neuronal myelin sheath maintenance. May play a role in iron uptake and iron homeostasis. Soluble oligomers are toxic to cultured neuroblastoma cells and induce apoptosis (in vitro). Association with GPC1 (via its heparan sulfate chains) targets PRNP to lipid rafts. Also provides Cu(2+) or Zn(2+) for the ascorbate-mediated GPC1 deaminase degradation of its heparan sulfate side chains. This Saimiri sciureus (Common squirrel monkey) protein is Major prion protein (PRNP).